The primary structure comprises 953 residues: Glycine dehydrogenase (decarboxylating) (953 aa).

Lysine 705 bears the N6-(pyridoxal phosphate)lysine mark.

Belongs to the GcvP family. As to quaternary structure, the glycine cleavage system is composed of four proteins: P, T, L and H. Requires pyridoxal 5'-phosphate as cofactor.

It catalyses the reaction N(6)-[(R)-lipoyl]-L-lysyl-[glycine-cleavage complex H protein] + glycine + H(+) = N(6)-[(R)-S(8)-aminomethyldihydrolipoyl]-L-lysyl-[glycine-cleavage complex H protein] + CO2. Functionally, the glycine cleavage system catalyzes the degradation of glycine. The P protein binds the alpha-amino group of glycine through its pyridoxal phosphate cofactor; CO(2) is released and the remaining methylamine moiety is then transferred to the lipoamide cofactor of the H protein. This chain is Glycine dehydrogenase (decarboxylating), found in Sodalis glossinidius (strain morsitans).